We begin with the raw amino-acid sequence, 728 residues long: Ankyrin repeat protein A (728 aa).

ANK repeat units follow at residues 381–410, 429–458, 477–506, 525–554, and 573–602; these read INLPGLYLAINYGNADIVETIFNSLSETGY, NGFSGLFLAISRKDKNVVTSILNALPKLAA, TSSHVLYHVMANGDADMLKIVLNALPLLIR, YGCPGLYLAMQNGHSDIVKVILEALPSLAQ, and ARDTGLFMAMQRGHMNVINTIFNALPTLFN.

The protein belongs to the Toxin_15 family.

This is Ankyrin repeat protein A (arpA) from Escherichia coli (strain K12).